We begin with the raw amino-acid sequence, 85 residues long: uncharacterized protein (85 aa).

Residues 35 to 85 (SDKDAPFSTQALTRSKSKRKRSALPVANGLKKPTRSIKRPSRGERLSATTI) form a disordered region.

This is an uncharacterized protein from Pasteurella multocida (strain Pm70).